A 933-amino-acid polypeptide reads, in one-letter code: Collagen alpha-2(I) chain (933 aa).

Over residues 1 to 16 the composition is skewed to gly residues; the sequence is SGGFDFGVGLGPGPMG. Disordered regions lie at residues 1–191 and 206–933; these read SGGF…LTGA and LPGP…AGVR. Residues 17 to 53 show a composition bias toward low complexity; the sequence is LMGPRGPPGASGAPGPQGFQGPAGEPGEPGQTGPAGA. Residues P24 and P30 each carry the 4-hydroxyproline modification. Over residues 57–72 the composition is skewed to basic and acidic residues; it reads KAGEDGHPGKPGRPGE. K94 bears the 5-hydroxylysine; alternate mark. A glycan (O-linked (Gal...) hydroxylysine; alternate) is linked at K94. 3 stretches are compositionally biased toward low complexity: residues 108-137, 162-176, and 213-228; these read VGAP…SAGP, AGPR…VSGP, and PGPV…RGLV. Residues 280–289 show a composition bias toward gly residues; that stretch reads GLRGGPGSRG. P317 and P320 each carry 4-hydroxyproline. A compositionally biased stretch (gly residues) spans 413-422; it reads GVQGGKGEQG. 2 stretches are compositionally biased toward low complexity: residues 468–485 and 497–507; these read PGES…SRGP and EPGVVGAPGTA. Residues 508-517 are compositionally biased toward gly residues; that stretch reads GPAGSGGLPG. 3 stretches are compositionally biased toward low complexity: residues 540-584, 591-611, and 627-640; these read VGTT…PRGS, VGPA…QPGA, and PTGP…SGPN. A compositionally biased stretch (gly residues) spans 644 to 656; the sequence is GPAGGRGDGGPPG. The span at 657–667 shows a compositional bias: low complexity; sequence LTGFPGAAGRT. The segment covering 704–713 has biased composition (gly residues); that stretch reads GETGAGGPPG. Low complexity-rich tracts occupy residues 721–748 and 756–781; these read SGEP…LGLP and LPGV…RGPS. A compositionally biased stretch (basic and acidic residues) spans 795–807; it reads AGRDGLPGHKGER. Composition is skewed to low complexity over residues 809–831 and 840–860; these read YAGN…VGPA and PGPA…PSGP. The segment covering 864-874 has biased composition (basic and acidic residues); the sequence is RGDKGEGDKGP.

This sequence belongs to the fibrillar collagen family. Trimers of one alpha 2(I) and two alpha 1(I) chains. Interacts (via C-terminus) with TMEM131 (via PapD-L domain); the interaction is direct and is involved in assembly and TRAPPIII ER-to-Golgi transport complex-dependent secretion of collagen. Prolines at the third position of the tripeptide repeating unit (G-X-Y) are hydroxylated in some or all of the chains. In terms of tissue distribution, expressed in bones.

It localises to the secreted. Its subcellular location is the extracellular space. The protein resides in the extracellular matrix. In terms of biological role, type I collagen is a member of group I collagen (fibrillar forming collagen). The sequence is that of Collagen alpha-2(I) chain from Glyptodon sp. (strain SLP-2019) (Giant armadillo).